Consider the following 354-residue polypeptide: Adenine deaminase (354 aa).

Residues H20, H22, and H200 each contribute to the Zn(2+) site. E203 functions as the Proton donor in the catalytic mechanism. D281 provides a ligand contact to Zn(2+). D282 provides a ligand contact to substrate.

Belongs to the metallo-dependent hydrolases superfamily. Adenosine and AMP deaminases family. Adenine deaminase type 2 subfamily. It depends on Zn(2+) as a cofactor.

The enzyme catalyses adenine + H2O + H(+) = hypoxanthine + NH4(+). Functionally, catalyzes the hydrolytic deamination of adenine to hypoxanthine. Plays an important role in the purine salvage pathway and in nitrogen catabolism. This chain is Adenine deaminase, found in Cupriavidus metallidurans (strain ATCC 43123 / DSM 2839 / NBRC 102507 / CH34) (Ralstonia metallidurans).